We begin with the raw amino-acid sequence, 421 residues long: 4-hydroxy-3-methylbut-2-en-1-yl diphosphate synthase (flavodoxin) (421 aa).

Residues Cys-311, Cys-314, Cys-357, and Glu-364 each contribute to the [4Fe-4S] cluster site.

This sequence belongs to the IspG family. [4Fe-4S] cluster serves as cofactor.

It catalyses the reaction (2E)-4-hydroxy-3-methylbut-2-enyl diphosphate + oxidized [flavodoxin] + H2O + 2 H(+) = 2-C-methyl-D-erythritol 2,4-cyclic diphosphate + reduced [flavodoxin]. It participates in isoprenoid biosynthesis; isopentenyl diphosphate biosynthesis via DXP pathway; isopentenyl diphosphate from 1-deoxy-D-xylulose 5-phosphate: step 5/6. Functionally, converts 2C-methyl-D-erythritol 2,4-cyclodiphosphate (ME-2,4cPP) into 1-hydroxy-2-methyl-2-(E)-butenyl 4-diphosphate. The chain is 4-hydroxy-3-methylbut-2-en-1-yl diphosphate synthase (flavodoxin) from Xanthomonas oryzae pv. oryzae (strain KACC10331 / KXO85).